Here is a 108-residue protein sequence, read N- to C-terminus: Integration host factor subunit alpha (108 aa).

Belongs to the bacterial histone-like protein family. Heterodimer of an alpha and a beta chain.

In terms of biological role, this protein is one of the two subunits of integration host factor, a specific DNA-binding protein that functions in genetic recombination as well as in transcriptional and translational control. The sequence is that of Integration host factor subunit alpha from Bartonella henselae (strain ATCC 49882 / DSM 28221 / CCUG 30454 / Houston 1) (Rochalimaea henselae).